The sequence spans 325 residues: Elongation factor P--(R)-beta-lysine ligase (325 aa).

76–78 (SPE) lines the substrate pocket. ATP is bound by residues 100 to 102 (RNE) and Asn109. Position 118 (Tyr118) interacts with substrate. 244–245 (EL) contacts ATP. Residue Glu251 coordinates substrate. Gly300 is an ATP binding site.

The protein belongs to the class-II aminoacyl-tRNA synthetase family. EpmA subfamily. In terms of assembly, homodimer.

It carries out the reaction D-beta-lysine + L-lysyl-[protein] + ATP = N(6)-((3R)-3,6-diaminohexanoyl)-L-lysyl-[protein] + AMP + diphosphate + H(+). In terms of biological role, with EpmB is involved in the beta-lysylation step of the post-translational modification of translation elongation factor P (EF-P) on 'Lys-34'. Catalyzes the ATP-dependent activation of (R)-beta-lysine produced by EpmB, forming a lysyl-adenylate, from which the beta-lysyl moiety is then transferred to the epsilon-amino group of EF-P 'Lys-34'. The sequence is that of Elongation factor P--(R)-beta-lysine ligase from Salmonella agona (strain SL483).